The chain runs to 302 residues: Potassium/proton antiporter CemA (302 aa).

Helical transmembrane passes span 55–75 (VFVS…ITFL), 187–207 (FVSF…IIIL), 225–247 (FLLI…ELFL), and 262–282 (FIFL…KYWI).

It belongs to the CemA family.

The protein localises to the plastid. It is found in the chloroplast inner membrane. The catalysed reaction is K(+)(in) + H(+)(out) = K(+)(out) + H(+)(in). Functionally, contributes to K(+)/H(+) antiport activity by supporting proton efflux to control proton extrusion and homeostasis in chloroplasts in a light-dependent manner to modulate photosynthesis. Prevents excessive induction of non-photochemical quenching (NPQ) under continuous-light conditions. Indirectly promotes efficient inorganic carbon uptake into chloroplasts. In Tupiella akineta (Green alga), this protein is Potassium/proton antiporter CemA.